A 411-amino-acid polypeptide reads, in one-letter code: Class E basic helix-loop-helix protein 40 (411 aa).

Residues 1 to 20 (MERIPSAQPPPTCLPKAPGL) form a disordered region. The tract at residues 1–139 (MERIPSAQPP…LSGRNLEAGQ (139 aa)) is essential for interaction with BMAL1, E-box binding and repressor activity against the CLOCK-BMAL1 heterodimer. The region spanning 52–107 (TYKLPHRLIEKKRRDRINECIAQLKDLLPEHLKLTTLGHLEKAVVLELTLKHVKAL) is the bHLH domain. Positions 75-79 (LKDLL) are necessary for interaction with RXRA and repressor activity against RXRA. The region spanning 142–175 (FCSGFQTCAREVLQYLAKHENTRDLKSSQLVTHL) is the Orange domain. Lys159 participates in a covalent cross-link: Glycyl lysine isopeptide (Lys-Gly) (interchain with G-Cter in SUMO1, SUMO2 and SUMO3). Lys167 participates in a covalent cross-link: Glycyl lysine isopeptide (Lys-Gly) (interchain with G-Cter in SUMO2). The tract at residues 227-294 (FAPSGGEQSG…PPTKKSRMQL (68 aa)) is disordered. A Phosphoserine modification is found at Ser235. Over residues 248–271 (ELEKGDLRSEQPYFKSDHGRRFAV) the composition is skewed to basic and acidic residues. Residue Lys279 forms a Glycyl lysine isopeptide (Lys-Gly) (interchain with G-Cter in SUMO1); alternate linkage. Residue Lys279 forms a Glycyl lysine isopeptide (Lys-Gly) (interchain with G-Cter in SUMO1, SUMO2 and SUMO3); alternate linkage. Lys279 is covalently cross-linked (Glycyl lysine isopeptide (Lys-Gly) (interchain with G-Cter in SUMO2); alternate). Lys288 is covalently cross-linked (Glycyl lysine isopeptide (Lys-Gly) (interchain with G-Cter in SUMO2)). Position 383 is a phosphoserine (Ser383).

Homodimer. Heterodimer with BHLHE41/DEC2. Interacts with ubiquitin-conjugating enzyme UBE2I/UBC9. Interacts with HDAC1, SUMO1, RXRA and BMAL1. Interacts with TCF3/E47. Post-translationally, ubiquitinated; which may lead to proteasomal degradation. In terms of processing, sumoylation inhibits its ubiquitination and promotes its negative regulation of the CLOCK-BMAL1 heterodimer transcriptional activator activity.

It localises to the cytoplasm. The protein localises to the nucleus. In terms of biological role, transcriptional repressor involved in the regulation of the circadian rhythm by negatively regulating the activity of the clock genes and clock-controlled genes. Acts as the negative limb of a novel autoregulatory feedback loop (DEC loop) which differs from the one formed by the PER and CRY transcriptional repressors (PER/CRY loop). Both these loops are interlocked as it represses the expression of PER1/2 and in turn is repressed by PER1/2 and CRY1/2. Represses the activity of the circadian transcriptional activator: CLOCK-BMAL1|BMAL2 heterodimer by competing for the binding to E-box elements (5'-CACGTG-3') found within the promoters of its target genes. Negatively regulates its own expression and the expression of DBP and BHLHE41/DEC2. Acts as a corepressor of RXR and the RXR-LXR heterodimers and represses the ligand-induced RXRA and NR1H3/LXRA transactivation activity. May function as a transcriptional factor for neuronal differentiation. Represses the transcription of NR0B2 and attentuates the transactivation of NR0B2 by the CLOCK-BMAL1 complex. Drives the circadian rhythm of blood pressure through transcriptional repression of ATP1B1 in the cardiovascular system. This Mus musculus (Mouse) protein is Class E basic helix-loop-helix protein 40 (Bhlhe40).